Reading from the N-terminus, the 175-residue chain is Large ribosomal subunit protein uL22y (175 aa).

The span at E153–E163 shows a compositional bias: basic and acidic residues. The segment at E153–A175 is disordered.

Belongs to the universal ribosomal protein uL22 family.

In Arabidopsis thaliana (Mouse-ear cress), this protein is Large ribosomal subunit protein uL22y (RPL17B).